Here is a 396-residue protein sequence, read N- to C-terminus: Mevalonate kinase (396 aa).

ATP is bound by residues Lys13, Asn55, Ser135, and 140-146 (GAGLGSS). The Proton donor role is filled by Ser146. 2 residues coordinate Mg(2+): Ser146 and Glu193. Catalysis depends on Asp204, which acts as the Proton acceptor.

The protein belongs to the GHMP kinase family. Mevalonate kinase subfamily. As to quaternary structure, homodimer. It depends on Mg(2+) as a cofactor.

It is found in the cytoplasm. The protein resides in the peroxisome. It catalyses the reaction (R)-mevalonate + ATP = (R)-5-phosphomevalonate + ADP + H(+). It participates in isoprenoid biosynthesis; isopentenyl diphosphate biosynthesis via mevalonate pathway; isopentenyl diphosphate from (R)-mevalonate: step 1/3. Farnesyl pyrophosphate and geranyl pyrophosphate inhibit mevalonate kinase activity by binding competitively at the ATP-binding sites. Functionally, catalyzes the phosphorylation of mevalonate to mevalonate 5-phosphate, a key step in isoprenoid and cholesterol biosynthesis. The sequence is that of Mevalonate kinase from Bos taurus (Bovine).